The chain runs to 217 residues: Thiopurine S-methyltransferase (217 aa).

4 residues coordinate S-adenosyl-L-methionine: Trp11, Leu46, Glu67, and Arg122.

It belongs to the class I-like SAM-binding methyltransferase superfamily. TPMT family.

It localises to the cytoplasm. The catalysed reaction is S-adenosyl-L-methionine + a thiopurine = S-adenosyl-L-homocysteine + a thiopurine S-methylether.. In Vibrio vulnificus (strain YJ016), this protein is Thiopurine S-methyltransferase.